A 909-amino-acid chain; its full sequence is uncharacterized protein (909 aa).

This is an uncharacterized protein from Sinorhizobium fredii (strain NBRC 101917 / NGR234).